Consider the following 388-residue polypeptide: Xylose isomerase (388 aa).

Active-site residues include H54 and D57. 7 residues coordinate Mg(2+): E181, E217, H220, D245, D255, D257, and D287.

This sequence belongs to the xylose isomerase family. In terms of assembly, homotetramer. Mg(2+) is required as a cofactor.

The protein localises to the cytoplasm. The enzyme catalyses alpha-D-xylose = alpha-D-xylulofuranose. In Streptomyces thermocyaneoviolaceus, this protein is Xylose isomerase.